A 116-amino-acid polypeptide reads, in one-letter code: Large ribosomal subunit protein bL20 (116 aa).

The protein belongs to the bacterial ribosomal protein bL20 family.

In terms of biological role, binds directly to 23S ribosomal RNA and is necessary for the in vitro assembly process of the 50S ribosomal subunit. It is not involved in the protein synthesizing functions of that subunit. The polypeptide is Large ribosomal subunit protein bL20 (Mycoplasmopsis agalactiae (strain NCTC 10123 / CIP 59.7 / PG2) (Mycoplasma agalactiae)).